A 319-amino-acid chain; its full sequence is Transaldolase (319 aa).

Lys126 acts as the Schiff-base intermediate with substrate in catalysis.

It belongs to the transaldolase family. Type 1 subfamily. Homodimer.

It localises to the cytoplasm. It carries out the reaction D-sedoheptulose 7-phosphate + D-glyceraldehyde 3-phosphate = D-erythrose 4-phosphate + beta-D-fructose 6-phosphate. Its pathway is carbohydrate degradation; pentose phosphate pathway; D-glyceraldehyde 3-phosphate and beta-D-fructose 6-phosphate from D-ribose 5-phosphate and D-xylulose 5-phosphate (non-oxidative stage): step 2/3. In terms of biological role, transaldolase is important for the balance of metabolites in the pentose-phosphate pathway. The chain is Transaldolase from Bordetella avium (strain 197N).